The sequence spans 74 residues: Major structural pilin EpdE (74 aa).

A propeptide spanning residues 1–12 is cleaved from the precursor; it reads MKFLEKLTSKKG. At Q13 the chain carries Pyrrolidone carboxylic acid. A QXSXEXXXL motif is present at residues 13 to 21; it reads QIAMELGIL.

Post-translationally, the N-terminus is cleaved by the prepilin peptidase EppA, which recognizes the class III signal sequence. N-glycosylated. Glycosylated with an N-linked branched pentasaccharide glycan. May contain glycans at three sites. Glycosylation is AglB-dependent. The N-glycosylation does not occur unless the signal peptide has been cleaved first.

The protein resides in the secreted. The protein localises to the cell surface. Its subcellular location is the fimbrium. Major component of the type IV-like pili. This Methanococcus maripaludis (strain DSM 14266 / JCM 13030 / NBRC 101832 / S2 / LL) protein is Major structural pilin EpdE.